We begin with the raw amino-acid sequence, 279 residues long: Putative short-chain type dehydrogenase/reductase MSMEG_6031/MSMEI_5872 (279 aa).

NAD(+) is bound at residue F11–D33. K65 participates in a covalent cross-link: Isoglutamyl lysine isopeptide (Lys-Gln) (interchain with Q-Cter in protein Pup). S158 provides a ligand contact to substrate. The Proton acceptor role is filled by Y171.

This sequence belongs to the short-chain dehydrogenases/reductases (SDR) family.

The chain is Putative short-chain type dehydrogenase/reductase MSMEG_6031/MSMEI_5872 from Mycolicibacterium smegmatis (strain ATCC 700084 / mc(2)155) (Mycobacterium smegmatis).